Here is a 219-residue protein sequence, read N- to C-terminus: Uracil-DNA glycosylase (219 aa).

Aspartate 61 (proton acceptor) is an active-site residue.

This sequence belongs to the uracil-DNA glycosylase (UDG) superfamily. UNG family.

The protein localises to the cytoplasm. The catalysed reaction is Hydrolyzes single-stranded DNA or mismatched double-stranded DNA and polynucleotides, releasing free uracil.. Excises uracil residues from the DNA which can arise as a result of misincorporation of dUMP residues by DNA polymerase or due to deamination of cytosine. In Exiguobacterium sibiricum (strain DSM 17290 / CCUG 55495 / CIP 109462 / JCM 13490 / 255-15), this protein is Uracil-DNA glycosylase.